The following is a 439-amino-acid chain: Tubulin beta chain (439 aa).

Residues Gln11, Glu69, Ser138, Gly142, Thr143, Gly144, Asn204, and Asn226 each coordinate GTP. Glu69 is a binding site for Mg(2+).

Belongs to the tubulin family. As to quaternary structure, dimer of alpha and beta chains. A typical microtubule is a hollow water-filled tube with an outer diameter of 25 nm and an inner diameter of 15 nM. Alpha-beta heterodimers associate head-to-tail to form protofilaments running lengthwise along the microtubule wall with the beta-tubulin subunit facing the microtubule plus end conferring a structural polarity. Microtubules usually have 13 protofilaments but different protofilament numbers can be found in some organisms and specialized cells. Mg(2+) is required as a cofactor.

The protein resides in the cytoplasm. The protein localises to the cytoskeleton. Tubulin is the major constituent of microtubules, a cylinder consisting of laterally associated linear protofilaments composed of alpha- and beta-tubulin heterodimers. Microtubules grow by the addition of GTP-tubulin dimers to the microtubule end, where a stabilizing cap forms. Below the cap, tubulin dimers are in GDP-bound state, owing to GTPase activity of alpha-tubulin. The protein is Tubulin beta chain (TUB2) of Encephalitozoon cuniculi (strain GB-M1) (Microsporidian parasite).